Here is a 307-residue protein sequence, read N- to C-terminus: Estrogen receptor (307 aa).

The nuclear receptor DNA-binding region spans 1-43; the sequence is GHNDYMCPATNQCTIDKNRRKSCQACRLRKCYEVGMMKGGIRK. The NR C4-type zinc-finger motif lies at 7–31; that stretch reads CPATNQCTIDKNRRKSCQACRLRKC. The interval 44–95 is hinge; sequence DRRGGRILKHKRQREEHDNRNAGAIVERRSPNLWPSPLMITHNKKNSPALSL. One can recognise an NR LBD domain in the interval 96-307; sequence TADQIVSALL…HFRHMSNKGM (212 aa).

This sequence belongs to the nuclear hormone receptor family. NR3 subfamily. Binds DNA as a homodimer. Can form a heterodimer with ER-beta.

The protein resides in the nucleus. Its function is as follows. The steroid hormones and their receptors are involved in the regulation of eukaryotic gene expression and affect cellular proliferation and differentiation in target tissues. The chain is Estrogen receptor (ESR1) from Aspidoscelis uniparens (Desert grassland whiptail lizard).